The sequence spans 487 residues: MTNEVRVRYAPSPTGYPHLGNIRTAMFNWLFARHNGGKFIVRIEDTDRERYVEGAVESILESLNWLGLDWDEGPDKGGDYGPYYQSERLPLYRKAAEKLVAEGKAYYCHCSSEKLDKMREDQIARKEPPGYDRCCRDRGLGQKEGAVIRFKIPLDGQTAFTDLIRGEVTFDNAKQDDFVILKSDGFPTYHLASVVDDHAMQISHVLRAEEWLPSTPKHLMLYKALGYTPPLYAHLPMILGPDRSKLSKRHGATSTIEYKQAGYLPETMVNFLSLLGWAYDDKTELFSREQLIEYFCLEKVSKTAAIFNYEKLDWMNGMYIRTLSAQDLACRAMPFLEKDARIAASGHLNLDYTVKVMPLIQERAKKLNELAELCWFIYSDDISYDPALLIDKKLTKETSLSALKAANARLEALPNFDAASMEEHIRPLAAELELKPGQLFGMLRTASTGQQVAPPLFQTMEVLGRQRCLGRIAMAIARLSEMPSQRS.

The 'HIGH' region signature appears at 11 to 21 (PSPTGYPHLGN). 4 residues coordinate Zn(2+): cysteine 108, cysteine 110, cysteine 135, and aspartate 137. A 'KMSKS' region motif is present at residues 245–249 (KLSKR). Residue lysine 248 participates in ATP binding.

This sequence belongs to the class-I aminoacyl-tRNA synthetase family. Glutamate--tRNA ligase type 1 subfamily. Monomer. Zn(2+) is required as a cofactor.

It is found in the cytoplasm. The catalysed reaction is tRNA(Glu) + L-glutamate + ATP = L-glutamyl-tRNA(Glu) + AMP + diphosphate. Functionally, catalyzes the attachment of glutamate to tRNA(Glu) in a two-step reaction: glutamate is first activated by ATP to form Glu-AMP and then transferred to the acceptor end of tRNA(Glu). This Dehalococcoides mccartyi (strain ATCC BAA-2100 / JCM 16839 / KCTC 5957 / BAV1) protein is Glutamate--tRNA ligase.